Reading from the N-terminus, the 628-residue chain is tRNA uridine 5-carboxymethylaminomethyl modification enzyme MnmG (628 aa).

Residues 11–16 (GAGHAG), V123, and S178 each bind FAD. 271 to 285 (GPRYCPSIETKIVTF) lines the NAD(+) pocket. Q368 contacts FAD.

This sequence belongs to the MnmG family. In terms of assembly, homodimer. Heterotetramer of two MnmE and two MnmG subunits. It depends on FAD as a cofactor.

It is found in the cytoplasm. Its function is as follows. NAD-binding protein involved in the addition of a carboxymethylaminomethyl (cmnm) group at the wobble position (U34) of certain tRNAs, forming tRNA-cmnm(5)s(2)U34. This is tRNA uridine 5-carboxymethylaminomethyl modification enzyme MnmG from Bacteroides thetaiotaomicron (strain ATCC 29148 / DSM 2079 / JCM 5827 / CCUG 10774 / NCTC 10582 / VPI-5482 / E50).